We begin with the raw amino-acid sequence, 693 residues long: Polyribonucleotide nucleotidyltransferase (693 aa).

Mg(2+) contacts are provided by Asp-489 and Asp-495. Positions 556–615 (PQIHVMNINPAKIKDVVGRGGATVKGIVEKTGAQIDTSDSGEVKVFAKDKKSMDMAVAMI) constitute a KH domain. Residues 625–693 (GQVYKGKIVK…GRVKLSLVAR (69 aa)) enclose the S1 motif domain.

The protein belongs to the polyribonucleotide nucleotidyltransferase family. As to quaternary structure, component of the RNA degradosome, which is a multiprotein complex involved in RNA processing and mRNA degradation. The cofactor is Mg(2+).

The protein localises to the cytoplasm. The enzyme catalyses RNA(n+1) + phosphate = RNA(n) + a ribonucleoside 5'-diphosphate. Functionally, involved in mRNA degradation. Catalyzes the phosphorolysis of single-stranded polyribonucleotides processively in the 3'- to 5'-direction. The chain is Polyribonucleotide nucleotidyltransferase from Francisella tularensis subsp. novicida (strain U112).